We begin with the raw amino-acid sequence, 120 residues long: NAD(P)H-quinone oxidoreductase subunit 3 (120 aa).

Helical transmembrane passes span 1 to 21, 64 to 84, and 89 to 109; these read MFVLSGYEYLLGFLIICSLVP, MFALVFVVFDVETVFLYPWAV, and LGLLAFIEALIFIAILVVALV.

This sequence belongs to the complex I subunit 3 family. As to quaternary structure, NDH-1 can be composed of about 15 different subunits; different subcomplexes with different compositions have been identified which probably have different functions.

Its subcellular location is the cellular thylakoid membrane. It catalyses the reaction a plastoquinone + NADH + (n+1) H(+)(in) = a plastoquinol + NAD(+) + n H(+)(out). The catalysed reaction is a plastoquinone + NADPH + (n+1) H(+)(in) = a plastoquinol + NADP(+) + n H(+)(out). NDH-1 shuttles electrons from an unknown electron donor, via FMN and iron-sulfur (Fe-S) centers, to quinones in the respiratory and/or the photosynthetic chain. The immediate electron acceptor for the enzyme in this species is believed to be plastoquinone. Couples the redox reaction to proton translocation, and thus conserves the redox energy in a proton gradient. Cyanobacterial NDH-1 also plays a role in inorganic carbon-concentration. The polypeptide is NAD(P)H-quinone oxidoreductase subunit 3 (Trichormus variabilis (strain ATCC 29413 / PCC 7937) (Anabaena variabilis)).